The following is an 89-amino-acid chain: Small ribosomal subunit protein uS15 (89 aa).

It belongs to the universal ribosomal protein uS15 family. Part of the 30S ribosomal subunit. Forms a bridge to the 50S subunit in the 70S ribosome, contacting the 23S rRNA.

Its function is as follows. One of the primary rRNA binding proteins, it binds directly to 16S rRNA where it helps nucleate assembly of the platform of the 30S subunit by binding and bridging several RNA helices of the 16S rRNA. In terms of biological role, forms an intersubunit bridge (bridge B4) with the 23S rRNA of the 50S subunit in the ribosome. This Sinorhizobium medicae (strain WSM419) (Ensifer medicae) protein is Small ribosomal subunit protein uS15.